A 387-amino-acid polypeptide reads, in one-letter code: Proline-rich protein 5 (387 aa).

2 interaction with RICTOR regions span residues 10–96 (MSSP…LTKG) and 189–219 (HESRGVTEDYLRLETLIQKVVSPYLGTYGLY). Positions 13 to 34 (PSLSDLGKREPGAAGTDERGTQ) are disordered. Basic and acidic residues predominate over residues 18 to 33 (LGKREPGAAGTDERGT). At S253 the chain carries Phosphoserine. Residues 262 to 387 (NPVAEHEAEG…EAPGGRPSVV (126 aa)) form a disordered region. A compositionally biased stretch (polar residues) spans 305–314 (SGTFRSSPTP). S373 carries the phosphoserine modification.

This sequence belongs to the PROTOR family. As to quaternary structure, associated component of the mechanistic target of rapamycin complex 2 (mTORC2). Binds directly to MTOR and RICTOR within the TORC2 complex. As to expression, ubiquitously expressed. Expressed at high levels in kidney.

Its function is as follows. Associated subunit of mTORC2, which regulates cell growth and survival in response to hormonal signals. mTORC2 is activated by growth factors, but, in contrast to mTORC1, seems to be nutrient-insensitive. mTORC2 seems to function upstream of Rho GTPases to regulate the actin cytoskeleton, probably by activating one or more Rho-type guanine nucleotide exchange factors. PRR5 plays an important role in regulation of PDGFRB expression and in modulation of platelet-derived growth factor signaling. May act as a tumor suppressor in breast cancer. This Mus musculus (Mouse) protein is Proline-rich protein 5.